We begin with the raw amino-acid sequence, 283 residues long: ATP phosphoribosyltransferase (283 aa).

It belongs to the ATP phosphoribosyltransferase family. Long subfamily. Mg(2+) is required as a cofactor.

It localises to the cytoplasm. It carries out the reaction 1-(5-phospho-beta-D-ribosyl)-ATP + diphosphate = 5-phospho-alpha-D-ribose 1-diphosphate + ATP. The protein operates within amino-acid biosynthesis; L-histidine biosynthesis; L-histidine from 5-phospho-alpha-D-ribose 1-diphosphate: step 1/9. Its activity is regulated as follows. Feedback inhibited by histidine. Catalyzes the condensation of ATP and 5-phosphoribose 1-diphosphate to form N'-(5'-phosphoribosyl)-ATP (PR-ATP). Has a crucial role in the pathway because the rate of histidine biosynthesis seems to be controlled primarily by regulation of HisG enzymatic activity. This Methanopyrus kandleri (strain AV19 / DSM 6324 / JCM 9639 / NBRC 100938) protein is ATP phosphoribosyltransferase.